The sequence spans 182 residues: Isopentenyl-diphosphate Delta-isomerase (182 aa).

Mn(2+) is bound by residues His25 and His32. Positions 30–164 (LLHLAFSSWL…PWAFSPWMVM (135 aa)) constitute a Nudix hydrolase domain. Residue Cys67 is part of the active site. Residue His69 coordinates Mn(2+). Residue Glu87 participates in Mg(2+) binding. 2 residues coordinate Mn(2+): Glu114 and Glu116. Glu116 is a catalytic residue.

It belongs to the IPP isomerase type 1 family. Homodimer. Mg(2+) is required as a cofactor. The cofactor is Mn(2+).

It localises to the cytoplasm. The catalysed reaction is isopentenyl diphosphate = dimethylallyl diphosphate. The protein operates within isoprenoid biosynthesis; dimethylallyl diphosphate biosynthesis; dimethylallyl diphosphate from isopentenyl diphosphate: step 1/1. Functionally, catalyzes the 1,3-allylic rearrangement of the homoallylic substrate isopentenyl (IPP) to its highly electrophilic allylic isomer, dimethylallyl diphosphate (DMAPP). The polypeptide is Isopentenyl-diphosphate Delta-isomerase (Shigella boydii serotype 18 (strain CDC 3083-94 / BS512)).